A 143-amino-acid chain; its full sequence is Sec-independent protein translocase protein TatB (143 aa).

Residues 2-22 (FGNIGWGEFMVLLVAALVILG) form a helical membrane-spanning segment. Residues 97-143 (FDKPGSVSFDKSNPGTKAVSADPSTPTAPQNKPLAAGERPPIDLDAT) are disordered.

Belongs to the TatB family. As to quaternary structure, the Tat system comprises two distinct complexes: a TatABC complex, containing multiple copies of TatA, TatB and TatC subunits, and a separate TatA complex, containing only TatA subunits. Substrates initially bind to the TatABC complex, which probably triggers association of the separate TatA complex to form the active translocon.

The protein resides in the cell membrane. Part of the twin-arginine translocation (Tat) system that transports large folded proteins containing a characteristic twin-arginine motif in their signal peptide across membranes. Together with TatC, TatB is part of a receptor directly interacting with Tat signal peptides. TatB may form an oligomeric binding site that transiently accommodates folded Tat precursor proteins before their translocation. In Rhodococcus opacus (strain B4), this protein is Sec-independent protein translocase protein TatB.